Here is a 564-residue protein sequence, read N- to C-terminus: Asparagine synthetase domain-containing protein CG17486 (564 aa).

Cys-2 serves as the catalytic Nucleophile. A Glutamine amidotransferase type-2 domain is found at 2–180 (CGIFCSVVNN…PLGLFRVKLN (179 aa)). One can recognise an Asparagine synthetase domain in the interval 280–541 (PFCRLCMQKL…GLRDVVFLKK (262 aa)).

This Drosophila melanogaster (Fruit fly) protein is Asparagine synthetase domain-containing protein CG17486.